Reading from the N-terminus, the 76-residue chain is Proteolipid protein 2 (76 aa).

The MARVEL domain maps to 1-60; sequence ISGPWSDFFRALGAVILYLMTSIVVLVERGNNSKGAAGVLGLCAAGLFGYDAYITFPSGT. The helical transmembrane segment at 8-28 threads the bilayer; the sequence is FFRALGAVILYLMTSIVVLVE. Residue Asn31 is glycosylated (N-linked (GlcNAc...) asparagine). Residues 36 to 56 form a helical membrane-spanning segment; the sequence is AAGVLGLCAAGLFGYDAYITF.

Its subcellular location is the membrane. Functionally, may play a role in cell differentiation in the intestinal epithelium. This Ovis aries (Sheep) protein is Proteolipid protein 2 (PLP2).